The following is a 217-amino-acid chain: MIKKVSILNSNFIGVYARTWNDVTFLPVNISDEEKRIFEETLKTEVYKISIGNSFLIGSMLSMNSNGIVVADHGIDNLKSLNINGRNILSINNKLNAAGNNIIANDHAALIHKSFPDSIRKKIEDVLGVETVKGSIAGIKTVGSVAVLNDRGMLVTSEADEDEIKYLSDLFKINVKTGTANFGSNYVGASIIANSNGILVGEATTSIELGRIDDTLS.

Belongs to the eIF-6 family.

Its function is as follows. Binds to the 50S ribosomal subunit and prevents its association with the 30S ribosomal subunit to form the 70S initiation complex. The polypeptide is Translation initiation factor 6 (Picrophilus torridus (strain ATCC 700027 / DSM 9790 / JCM 10055 / NBRC 100828 / KAW 2/3)).